A 3419-amino-acid polypeptide reads, in one-letter code: Genome polyprotein (3419 aa).

The tract at residues 1 to 25 (MKNPKEEIRRIRIVNMLKRGVARVN) is disordered. Residues 1–104 (MKNPKEEIRR…INARKERKRR (104 aa)) are Cytoplasmic-facing. Residues 37 to 72 (LLLGHGPIRMVLAILAFLRFTAIKPSLGLINRWGSV) form a hydrophobic; homodimerization of capsid protein C region. Residues 105-122 (GADTSIGIIGLLLTTAMA) constitute a propeptide, ER anchor for capsid protein C, removed in mature form by serine protease NS3. Residues 105 to 125 (GADTSIGIIGLLLTTAMAAEI) traverse the membrane as a helical segment. At 126–249 (TRRGSAYYMY…YTKHLIKVEN (124 aa)) the chain is on the extracellular side. N-linked (GlcNAc...) asparagine; by host glycosylation occurs at Asn-192. Residues 250–269 (WIFRNPGFALVAVAIAWLLG) traverse the membrane as a helical segment. The Cytoplasmic portion of the chain corresponds to 270-274 (SSTSQ). Residues 275-290 (KVIYLVMILLIAPAYS) traverse the membrane as a helical segment. The Extracellular segment spans residues 291–741 (IRCIGVSNRD…HQIFGAAFKS (451 aa)). Cys-293 and Cys-320 are joined by a disulfide. A Glycyl lysine isopeptide (Lys-Gly) (interchain with G-Cter in ubiquitin) cross-link involves residue Lys-328. 7 cysteine pairs are disulfide-bonded: Cys-350-Cys-406, Cys-350-Cys-411, Cys-364-Cys-395, Cys-382-Cys-406, Cys-382-Cys-411, Cys-476-Cys-577, and Cys-594-Cys-625. The tract at residues 388–401 (DRGWGNGCGLFGKG) is fusion peptide. A Glycyl lysine isopeptide (Lys-Gly) (interchain with G-Cter in ubiquitin) cross-link involves residue Lys-567. Residues 742–763 (LFGGMSWFSQILIGTLLVWLGL) form a helical membrane-spanning segment. Residues 764–769 (NTKNGS) are Cytoplasmic-facing. Residues 770–790 (ISLTCLALGGVMIFLSTAVSA) form a helical membrane-spanning segment. Over 791 to 1173 (DVGCSVDFSK…EGLKKRMTTK (383 aa)) the chain is Lumenal. 6 disulfides stabilise this stretch: Cys-794/Cys-805, Cys-845/Cys-933, Cys-969/Cys-1013, Cys-1070/Cys-1119, Cys-1081/Cys-1102, and Cys-1103/Cys-1106. 2 N-linked (GlcNAc...) asparagine; by host glycosylation sites follow: Asn-920 and Asn-997. The helical transmembrane segment at 1174 to 1194 (IIMSTSMAVLVVMILGGFSMS) threads the bilayer. Residues 1195-1216 (DLAKLVILMGATFAEMNTGGDV) lie on the Cytoplasmic side of the membrane. A helical membrane pass occupies residues 1217 to 1237 (AHLALVAAFKVRPALLVSFIF). The Lumenal segment spans residues 1238-1266 (RANWTPRESMLLALASCLLQTAISALEGD). A helical membrane pass occupies residues 1267–1287 (LMVLINGFALAWLAIRAMAVP). The Cytoplasmic segment spans residues 1288–1291 (RTDN). Residues 1292 to 1312 (IALPILAALTPLARGTLLVAW) form a helical membrane-spanning segment. Topologically, residues 1313–1341 (RAGLATCGGIMLLSLKGKGSVKKNLPFVM) are lumenal. A helical transmembrane segment spans residues 1342 to 1362 (ALGLTAVRVVDPINVVGLLLL). The Cytoplasmic portion of the chain corresponds to 1363–1369 (TRSGKRS). Residues 1370-1390 (WPPSEVLTAVGLICALAGGFA) form a helical membrane-spanning segment. Over 1391 to 1393 (KAD) the chain is Lumenal. Residues 1394 to 1414 (IEMAGPMAAVGLLIVSYVVSG) traverse the membrane as a helical segment. Residues 1415 to 1468 (KSVDMYIERAGDITWEKDAEVTGNSPRLDVALDESGDFSLVEEDGPPMREIILK) lie on the Cytoplasmic side of the membrane. The interacts with and activates NS3 protease stretch occupies residues 1421–1460 (IERAGDITWEKDAEVTGNSPRLDVALDESGDFSLVEEDGP). The tract at residues 1425–1447 (GDITWEKDAEVTGNSPRLDVALD) is disordered. An intramembrane region (helical) is located at residues 1469-1489 (VVLMAICGMNPIAIPFAAGAW). The Lumenal segment spans residues 1490 to 2166 (YVYVKTGKRS…KAAAAQLPET (677 aa)). One can recognise a Peptidase S7 domain in the interval 1499 to 1676 (SGALWDVPAP…KREEETPVEC (178 aa)). Catalysis depends on charge relay system; for serine protease NS3 activity residues His-1549, Asp-1573, and Ser-1633. The Helicase ATP-binding domain occupies 1679–1835 (PSMLKKKQLT…DSNSPIMDTE (157 aa)). The interval 1683 to 1686 (KKKQ) is important for RNA-binding. 1692–1699 (LHPGAGKT) lines the ATP pocket. The DEAH box motif lies at 1783–1786 (DEAH). One can recognise a Helicase C-terminal domain in the interval 1830–2009 (PIMDTEVEVP…GLIASLYRPE (180 aa)). The residue at position 1887 (Lys-1887) is an N6-acetyllysine; by host. The chain crosses the membrane as a helical span at residues 2167–2187 (LETIMLLGLLGTVSLGIFFVL). Residues 2188–2191 (MRNK) are Lumenal-facing. Residues 2192–2212 (GIGKMGFGMVTLGASAWLMWL) constitute an intramembrane region (helical). Residues 2213–2214 (SE) are Cytoplasmic-facing. Residues 2215–2235 (IEPARIACVLIVVFLLLVVLI) traverse the membrane as a helical segment. Residues 2236-2250 (PEPEKQRSPQDNQMA) are Lumenal-facing. The segment at residues 2251 to 2265 (IIIMVAVGLLGLITA) is an intramembrane region (helical). The Lumenal segment spans residues 2266–2303 (NELGWLERTKNDIAHLMGRREEGATMGFSMDIDLRPAS). Residues 2304–2324 (AWAIYAALTTLITPAVQHAVT) constitute an intramembrane region (helical). Residues 2325–2340 (TSYNNYSLMAMATQAG) lie on the Lumenal side of the membrane. Residues 2341-2361 (VLFGMGKGMPFMHGDLGVPLL) form a helical membrane-spanning segment. The Cytoplasmic portion of the chain corresponds to 2362-2371 (MMGCYSQLTP). The helical transmembrane segment at 2372-2392 (LTLIVAIILLVAHYMYLIPGL) threads the bilayer. Residues 2393–2437 (QAAAARAAQKRTAAGIMKNPVVDGIVVTDIDTMTIDPQVEKKMGQ) are Lumenal-facing. A helical membrane pass occupies residues 2438 to 2458 (VLLIAVAISSAVLLRTAWGWG). The Cytoplasmic segment spans residues 2459-3419 (EAGALITAAT…GEEGSTPGVL (961 aa)). In terms of domain architecture, mRNA cap 0-1 NS5-type MT spans 2517–2781 (GGGTGETLGE…DVNLGSGTRA (265 aa)). The mRNA site is built by Lys-2529, Leu-2532, Asn-2533, Met-2535, Phe-2540, and Lys-2544. 2529 to 2535 (KARLNQM) serves as a coordination point for GTP. Residue Ser-2572 participates in S-adenosyl-L-methionine binding. Residue Ser-2572 is modified to Phosphoserine. Lys-2577 serves as the catalytic For 2'-O-MTase activity. Residues 2593–2596 (VVDL) are SUMO-interacting motif (SIM). Residues Gly-2602, Trp-2603, Thr-2620, Lys-2621, His-2626, Glu-2627, Asp-2647, Val-2648, Asp-2662, and Ile-2663 each coordinate S-adenosyl-L-methionine. Catalysis depends on Asp-2662, which acts as the For 2'-O-MTase activity. Position 2665 to 2671 (2665 to 2671 (ESSSSPE)) interacts with GTP. Residue Ser-2666 coordinates mRNA. Lys-2698 acts as the For 2'-O-MTase activity in catalysis. MRNA contacts are provided by Arg-2729 and Ser-2731. Residue 2729-2731 (RNS) coordinates GTP. The For 2'-O-MTase activity role is filled by Glu-2734. Tyr-2736 contributes to the S-adenosyl-L-methionine binding site. Positions 2904 to 2910 (KRKRPRV) match the Nuclear localization signal (NLS) motif. 4 residues coordinate Zn(2+): Glu-2955, His-2959, Cys-2964, and Cys-2967. One can recognise a RdRp catalytic domain in the interval 3045–3195 (GKMYADDTAG…KPIDDRFAHA (151 aa)). Zn(2+) contacts are provided by His-3230, Cys-3246, and Cys-3365.

In the N-terminal section; belongs to the class I-like SAM-binding methyltransferase superfamily. mRNA cap 0-1 NS5-type methyltransferase family. As to quaternary structure, homodimer. Interacts with host SERTAD3; this interaction promotes capsid protein C degradation. Interacts with host CAPRIN1; this interaction is probably linked to the inhibition of stress granules formation by the virus. Interacts with host G3BP1; this interaction is probably linked to the inhibition of stress granules formation by the virus. Forms heterodimers with envelope protein E in the endoplasmic reticulum and Golgi. Interacts with non-structural protein 2A. In terms of assembly, homodimer; in the endoplasmic reticulum and Golgi. Interacts with host TYRO3, AXL and DC-SIGN proteins. Interacts with non-structural protein 2A. Interacts with host HAVCR1; this interaction likely mediates virus attachment to host cell. Interacts with host NCAM1. Interacts with host HSPA5. Interacts with Aedes aegypti SRPN25, APY and venom allergen-1 salivary proteins; the interactions do not affect Zika virus replication in human endothelial cells and keratinocytes. As to quaternary structure, homodimer; Homohexamer when secreted. Interacts with host TBK1. Interacts with host USP8. Interacts with envelope protein E. Interacts with host HSPA5. Interacts with the structural protein prM/E complex, and the NS2B/NS3 protease complex. In terms of assembly, forms a heterodimer with serine protease NS3. May form homooligomers. Interacts with human SPCS1. Interacts with non-structural protein 2A. As to quaternary structure, forms a heterodimer with NS2B. Interacts with NS4B. Interacts with unphosphorylated RNA-directed RNA polymerase NS5; this interaction stimulates RNA-directed RNA polymerase NS5 guanylyltransferase activity. Interacts with non-structural protein 2A. Interacts with host SHFL; this interaction promotes NS3 degradation via a lysosome-dependent pathway. Interacts with host CEP63; this interaction disorganizes the centrosome and inhibits host innate immune response. May interact with host ANKLE2; the interaction may cause defects in brain development, such as microcephaly. May interact with host SRPRA and SEC61G. In terms of assembly, interacts with serine protease NS3. Interacts with NS1. Interacts with host TBK1. As to quaternary structure, homodimer. Interacts with host STAT2; this interaction inhibits the phosphorylation of the latter, and, when all viral proteins are present (polyprotein), targets STAT2 for degradation. Interacts with host TBK1 and IKBKE; these interactions lead to the inhibition of the host RIG-I signaling pathway. Interacts with host KPNA2. Interacts with host PAF1 complex; the interaction may prevent the recruitment of the host PAF1 complex to interferon-responsive genes, and thus reduces the immune response. Interacts with serine protease NS3. Interacts with host ZSWIM8; this interaction allows STAT2 binding to ZSWIM8 and subsequent proteasomal degradation leading to inhibition of interferon signaling. In terms of processing, specific enzymatic cleavages in vivo yield mature proteins. Cleavages in the lumen of endoplasmic reticulum are performed by host signal peptidase, whereas cleavages in the cytoplasmic side are performed by serine protease NS3. Signal cleavage at the 2K-4B site requires a prior NS3 protease-mediated cleavage at the 4A-2K site. Post-translationally, cleaved in post-Golgi vesicles by a host furin, releasing the mature small envelope protein M, and peptide pr. This cleavage is incomplete as up to 30% of viral particles still carry uncleaved prM. N-glycosylation plays a role in virulence in mammalian and mosquito hosts, but may have no effect on neurovirulence. In terms of processing, ubiquitination by host TRIM7 promotes virus attachment and fusion of the virus and the host endosome membrane. Post-translationally, N-glycosylated. The excreted form is glycosylated, which is required for efficient secretion of the protein from infected cells. Acetylated by host KAT5. Acetylation modulates NS3 RNA-binding and unwinding activities and plays an important positive role for viral replication. In terms of processing, phosphorylated on serines residues. This phosphorylation may trigger NS5 nuclear localization. Post-translationally, sumoylated, required for regulating IFN induced interferon stimulated genes/ISGs.

The protein localises to the virion. It is found in the host nucleus. The protein resides in the host cytoplasm. Its subcellular location is the host perinuclear region. It localises to the secreted. The protein localises to the virion membrane. It is found in the host endoplasmic reticulum membrane. The enzyme catalyses Selective hydrolysis of -Xaa-Xaa-|-Yaa- bonds in which each of the Xaa can be either Arg or Lys and Yaa can be either Ser or Ala.. The catalysed reaction is RNA(n) + a ribonucleoside 5'-triphosphate = RNA(n+1) + diphosphate. It catalyses the reaction a ribonucleoside 5'-triphosphate + H2O = a ribonucleoside 5'-diphosphate + phosphate + H(+). It carries out the reaction ATP + H2O = ADP + phosphate + H(+). The enzyme catalyses a 5'-end (5'-triphosphoguanosine)-ribonucleoside in mRNA + S-adenosyl-L-methionine = a 5'-end (N(7)-methyl 5'-triphosphoguanosine)-ribonucleoside in mRNA + S-adenosyl-L-homocysteine. The catalysed reaction is a 5'-end (N(7)-methyl 5'-triphosphoguanosine)-ribonucleoside in mRNA + S-adenosyl-L-methionine = a 5'-end (N(7)-methyl 5'-triphosphoguanosine)-(2'-O-methyl-ribonucleoside) in mRNA + S-adenosyl-L-homocysteine + H(+). In terms of biological role, plays a role in virus budding by binding to the host cell membrane and packages the viral RNA into a nucleocapsid that forms the core of the mature virus particle. During virus entry, may induce genome penetration into the host cytoplasm after hemifusion induced by the surface proteins. Can migrate to the cell nucleus where it modulates host functions. Inhibits the integrated stress response (ISR) in the infected cell. Its function is as follows. Inhibits RNA silencing by interfering with host Dicer. Functionally, prevents premature fusion activity of envelope proteins in trans-Golgi by binding to envelope protein E at pH 6.0. After virion release in extracellular space, gets dissociated from E dimers. Plays a role in host immune defense modulation and protection of envelope protein E during virion synthesis. PrM-E cleavage is inefficient, many virions are only partially matured and immature prM-E proteins could play a role in immune evasion. Contributes to fetal microcephaly in humans. Acts as a chaperone for envelope protein E during intracellular virion assembly by masking and inactivating envelope protein E fusion peptide. prM is the only viral peptide matured by host furin in the trans-Golgi network probably to avoid catastrophic activation of the viral fusion activity in acidic Golgi compartment prior to virion release. In terms of biological role, may play a role in virus budding. Exerts cytotoxic effects by activating a mitochondrial apoptotic pathway through M ectodomain. May display a viroporin activity. Its function is as follows. Binds to host cell surface receptors and mediates fusion between viral and cellular membranes. Efficient virus attachment to cell is, at least in part, mediated by host HAVCR1 in a cell-type specific manner. In addition, host NCAM1 can also be used as entry receptor. Interaction with host HSPA5 plays an important role in the early stages of infection as well. Envelope protein is synthesized in the endoplasmic reticulum and forms a heterodimer with protein prM. The heterodimer plays a role in virion budding in the ER, and the newly formed immature particle is covered with 60 spikes composed of heterodimers between precursor prM and envelope protein E. The virion is transported to the Golgi apparatus where the low pH causes the dissociation of PrM-E heterodimers and formation of E homodimers. PrM-E cleavage is inefficient, many virions are only partially matured and immature prM-E proteins could play a role in immune evasion. Functionally, plays a role in the inhibition of host RLR-induced interferon-beta activation by targeting TANK-binding kinase 1/TBK1. In addition, recruits the host deubiquitinase USP8 to cleave 'Lys-11'-linked polyubiquitin chains from caspase-1/CASP1 thus inhibiting its proteasomal degradation. In turn, stabilized CASP1 promotes cleavage of cGAS, which inhibits its ability to recognize mitochondrial DNA release and initiate type I interferon signaling. Component of the viral RNA replication complex that recruits genomic RNA, the structural protein prM/E complex, and the NS2B/NS3 protease complex to the virion assembly site and orchestrates virus morphogenesis. Antagonizes also the host MDA5-mediated induction of alpha/beta interferon antiviral response. May disrupt adherens junction formation and thereby impair proliferation of radial cells in the host cortex. In terms of biological role, required cofactor for the serine protease function of NS3. Its function is as follows. Displays three enzymatic activities: serine protease, NTPase and RNA helicase. NS3 serine protease, in association with NS2B, performs its autocleavage and cleaves the polyprotein at dibasic sites in the cytoplasm: C-prM, NS2A-NS2B, NS2B-NS3, NS3-NS4A, NS4A-2K and NS4B-NS5. NS3 RNA helicase binds RNA and unwinds dsRNA in the 3' to 5' direction. Leads to translation arrest when expressed ex vivo. Disrupts host centrosome organization in a CEP63-dependent manner to degrade host TBK1 and inhibits innate immune response. Inhibits the integrated stress response (ISR) in the infected cell. Functionally, regulates the ATPase activity of the NS3 helicase activity. NS4A allows NS3 helicase to conserve energy during unwinding. Cooperatively with NS4B suppresses the Akt-mTOR pathway and leads to cellular dysregulation. By inhibiting host ANKLE2 functions, may cause defects in brain development, such as microcephaly. Also antagonizes the host MDA5-mediated induction of alpha/beta interferon antiviral response. Inhibits the integrated stress response (ISR) in the infected cell. Functions as a signal peptide for NS4B and is required for the interferon antagonism activity of the latter. In terms of biological role, induces the formation of ER-derived membrane vesicles where the viral replication takes place. Also plays a role in the inhibition of host RLR-induced interferon-beta production at TANK-binding kinase 1/TBK1 level. Cooperatively with NS4A suppresses the Akt-mTOR pathway and leads to cellular dysregulation. Its function is as follows. Replicates the viral (+) and (-) RNA genome, and performs the capping of genomes in the cytoplasm. Methylates viral RNA cap at guanine N-7 and ribose 2'-O positions. Once sufficient NS5 is expressed, binds to the cap-proximal structure and inhibits further translation of the viral genome. Besides its role in RNA genome replication, also prevents the establishment of a cellular antiviral state by blocking the interferon-alpha/beta (IFN-alpha/beta) signaling pathway. Mechanistically, interferes with host kinases TBK1 and IKKE upstream of interferon regulatory factor 3/IRF3 to inhibit the RIG-I pathway. Also antagonizes type I interferon signaling by targeting STAT2 for degradation by the proteasome thereby preventing activation of JAK-STAT signaling pathway. Mechanistically, acts as a scaffold protein to connect host ZSWIM8/CUL3 ligase complex and STAT2, leading to STAT2 degradation. Within the host nucleus, disrupts host SUMO1 and STAT2 co-localization with PML, resulting in PML degradation. May also reduce immune responses by preventing the recruitment of the host PAF1 complex to interferon-responsive genes. This Aedes aegypti (Yellowfever mosquito) protein is Genome polyprotein.